Here is a 190-residue protein sequence, read N- to C-terminus: CASP-like protein 1E2 (190 aa).

The tract at residues 1-21 (MEHEGKNNMNGMEMEKGKREL) is disordered. At 1–28 (MEHEGKNNMNGMEMEKGKRELGSRKGVE) the chain is on the cytoplasmic side. The chain crosses the membrane as a helical span at residues 29 to 49 (LTMRVLALILTMAAATVLGVA). The Extracellular portion of the chain corresponds to 50 to 83 (KQTKVVSIKLIPTLPPLDITTTAKASYLSAFVYN). Residues 84-104 (ISVNAIACGYTAISIAILMIS) form a helical membrane-spanning segment. The Cytoplasmic portion of the chain corresponds to 105–111 (RGRRSKK). A helical membrane pass occupies residues 112–132 (LLMVVLLGDLVMVALLFSGTG). Residues 133–163 (AASAIGLMGLHGNKHVMWKKVCGVFGKFCHR) are Extracellular-facing. Residues 164 to 184 (AAPSLPLTLLAAVVFMFLVVL) form a helical membrane-spanning segment. Residues 185-190 (DAIKLP) are Cytoplasmic-facing.

This sequence belongs to the Casparian strip membrane proteins (CASP) family. As to quaternary structure, homodimer and heterodimers.

Its subcellular location is the cell membrane. This chain is CASP-like protein 1E2, found in Arabidopsis thaliana (Mouse-ear cress).